The following is an 83-amino-acid chain: Phytosulfokines 4 (83 aa).

The first 28 residues, 1–28 (MAARTVAVAAALAVLLIFAASSATVAMA), serve as a signal peptide directing secretion. Positions 29 to 74 (GRPTPTTSLDEEAAQAAAQSEIGGGCKEGEGEEECLARRTLTAHTD) are excised as a propeptide. Sulfotyrosine occurs at positions 75 and 77. A propeptide spanning residues 80–83 (QHHN) is cleaved from the precursor.

It belongs to the phytosulfokine family. In terms of processing, sulfation is important for activity and for the binding to a putative membrane receptor. PSK-alpha is produced by endopeptidase digestion. PSK-beta is produced from PSK-alpha by exopeptidase digestion.

The protein localises to the secreted. In terms of biological role, promotes plant cell differentiation, organogenesis and somatic embryogenesis as well as cell proliferation. The sequence is that of Phytosulfokines 4 (PSK4) from Oryza sativa subsp. japonica (Rice).